The sequence spans 599 residues: Sulfite reductase [NADPH] flavoprotein alpha-component (599 aa).

Positions 64 to 202 (ITLISASQTG…VAAQWRARIV (139 aa)) constitute a Flavodoxin-like domain. Residues 70 to 75 (SQTGNA), 117 to 120 (STQG), and 153 to 162 (LGDTSYEFFC) each bind FMN. One can recognise an FAD-binding FR-type domain in the interval 234-448 (EAPLRASLSV…IEHNDNFRLP (215 aa)). FAD contacts are provided by residues T322, A356, 386–389 (RLYS), 404–406 (TVG), Y410, and 419–422 (GGAS). NADP(+) contacts are provided by residues 519–520 (SR), 525–529 (KIYVQ), and D561. Y599 provides a ligand contact to FAD.

It belongs to the NADPH-dependent sulphite reductase flavoprotein subunit CysJ family. The protein in the N-terminal section; belongs to the flavodoxin family. This sequence in the C-terminal section; belongs to the flavoprotein pyridine nucleotide cytochrome reductase family. In terms of assembly, alpha(8)-beta(8). The alpha component is a flavoprotein, the beta component is a hemoprotein. The cofactor is FAD. FMN serves as cofactor.

The enzyme catalyses hydrogen sulfide + 3 NADP(+) + 3 H2O = sulfite + 3 NADPH + 4 H(+). It participates in sulfur metabolism; hydrogen sulfide biosynthesis; hydrogen sulfide from sulfite (NADPH route): step 1/1. Its function is as follows. Component of the sulfite reductase complex that catalyzes the 6-electron reduction of sulfite to sulfide. This is one of several activities required for the biosynthesis of L-cysteine from sulfate. The flavoprotein component catalyzes the electron flow from NADPH -&gt; FAD -&gt; FMN to the hemoprotein component. The chain is Sulfite reductase [NADPH] flavoprotein alpha-component from Salmonella arizonae (strain ATCC BAA-731 / CDC346-86 / RSK2980).